The primary structure comprises 935 residues: Isoleucine--tRNA ligase (935 aa).

The short motif at 58–68 (PYANGSIHVGH) is the 'HIGH' region element. E558 is a binding site for L-isoleucyl-5'-AMP. The 'KMSKS' region signature appears at 599 to 603 (KMSKS). Position 602 (K602) interacts with ATP. Positions 897, 900, 917, and 920 each coordinate Zn(2+).

This sequence belongs to the class-I aminoacyl-tRNA synthetase family. IleS type 1 subfamily. Monomer. Zn(2+) is required as a cofactor.

The protein resides in the cytoplasm. The enzyme catalyses tRNA(Ile) + L-isoleucine + ATP = L-isoleucyl-tRNA(Ile) + AMP + diphosphate. Its function is as follows. Catalyzes the attachment of isoleucine to tRNA(Ile). As IleRS can inadvertently accommodate and process structurally similar amino acids such as valine, to avoid such errors it has two additional distinct tRNA(Ile)-dependent editing activities. One activity is designated as 'pretransfer' editing and involves the hydrolysis of activated Val-AMP. The other activity is designated 'posttransfer' editing and involves deacylation of mischarged Val-tRNA(Ile). This is Isoleucine--tRNA ligase from Francisella tularensis subsp. mediasiatica (strain FSC147).